We begin with the raw amino-acid sequence, 1009 residues long: Probable beta-galactosidase B (1009 aa).

The N-terminal stretch at 1-27 is a signal peptide; the sequence is MKTIAGLSWISALSSLASLPNGLGVSA. Y96 contributes to the substrate binding site. The N-linked (GlcNAc...) asparagine glycan is linked to N106. Residues N141, A142, E143, and N201 each coordinate substrate. Residue E202 is the Proton donor of the active site. Y271 serves as a coordination point for substrate. Residues C277 and C330 are joined by a disulfide bond. The Nucleophile role is filled by E314. Position 379 (Y379) interacts with substrate. Residues N467, N495, N547, N593, N632, N672, N707, N775, N782, N789, N795, and N914 are each glycosylated (N-linked (GlcNAc...) asparagine).

The protein belongs to the glycosyl hydrolase 35 family.

The protein resides in the secreted. The enzyme catalyses Hydrolysis of terminal non-reducing beta-D-galactose residues in beta-D-galactosides.. In terms of biological role, cleaves beta-linked terminal galactosyl residues from gangliosides, glycoproteins, and glycosaminoglycans. The sequence is that of Probable beta-galactosidase B (lacB) from Pyrenophora tritici-repentis (strain Pt-1C-BFP) (Wheat tan spot fungus).